A 121-amino-acid polypeptide reads, in one-letter code: Surface glycoprotein CD59 homolog (121 aa).

The first 19 residues, 1–19 (MYILFTLVLTFVFCKPIHS), serve as a signal peptide directing secretion. A UPAR/Ly6 domain is found at 20–104 (LQCYNCSHST…ENIKRTISDK (85 aa)). Disulfide bonds link Cys22-Cys45, Cys25-Cys32, Cys38-Cys58, Cys64-Cys82, and Cys83-Cys88. A glycan (N-linked (GlcNAc...) asparagine; by host) is linked at Asn24. Asn96 is lipidated: GPI-anchor amidated asparagine; by host. The propeptide at 97-121 (IKRTISDKALLLLALFLVTAWNFPL) is removed in mature form.

It localises to the host cell membrane. This Saimiriine herpesvirus 2 (strain 11) (SaHV-2) protein is Surface glycoprotein CD59 homolog (15).